Consider the following 244-residue polypeptide: Small ribosomal subunit protein uS2 (244 aa).

This sequence belongs to the universal ribosomal protein uS2 family.

This Hydrogenovibrio crunogenus (strain DSM 25203 / XCL-2) (Thiomicrospira crunogena) protein is Small ribosomal subunit protein uS2.